Consider the following 242-residue polypeptide: Probable porphobilinogen deaminase (242 aa).

This sequence belongs to the HMBS family.

The enzyme catalyses 4 porphobilinogen + H2O = hydroxymethylbilane + 4 NH4(+). It functions in the pathway porphyrin-containing compound metabolism; protoporphyrin-IX biosynthesis; coproporphyrinogen-III from 5-aminolevulinate: step 2/4. In terms of biological role, tetrapolymerization of the monopyrrole PBG into the hydroxymethylbilane pre-uroporphyrinogen in several discrete steps. The protein is Probable porphobilinogen deaminase (hemC) of Chlamydia muridarum (strain MoPn / Nigg).